We begin with the raw amino-acid sequence, 355 residues long: UPF0421 protein BCE33L2478 (355 aa).

4 helical membrane-spanning segments follow: residues 19-39, 74-94, 109-129, and 131-151; these read IAVF…IFAV, FTFF…FTIV, TLTA…AFLI, and LATT…ILPP.

It belongs to the UPF0421 family.

It is found in the cell membrane. This chain is UPF0421 protein BCE33L2478, found in Bacillus cereus (strain ZK / E33L).